Consider the following 293-residue polypeptide: 4-hydroxy-3-methylbut-2-enyl diphosphate reductase (293 aa).

Cysteine 12 contacts [4Fe-4S] cluster. (2E)-4-hydroxy-3-methylbut-2-enyl diphosphate contacts are provided by histidine 40 and histidine 74. The dimethylallyl diphosphate site is built by histidine 40 and histidine 74. Isopentenyl diphosphate is bound by residues histidine 40 and histidine 74. Cysteine 96 serves as a coordination point for [4Fe-4S] cluster. Position 128 (histidine 128) interacts with (2E)-4-hydroxy-3-methylbut-2-enyl diphosphate. Position 128 (histidine 128) interacts with dimethylallyl diphosphate. An isopentenyl diphosphate-binding site is contributed by histidine 128. Glutamate 130 serves as the catalytic Proton donor. Residue threonine 166 participates in (2E)-4-hydroxy-3-methylbut-2-enyl diphosphate binding. Cysteine 202 is a binding site for [4Fe-4S] cluster. (2E)-4-hydroxy-3-methylbut-2-enyl diphosphate is bound by residues serine 230, serine 231, asparagine 232, and serine 274. Serine 230, serine 231, asparagine 232, and serine 274 together coordinate dimethylallyl diphosphate. 4 residues coordinate isopentenyl diphosphate: serine 230, serine 231, asparagine 232, and serine 274.

The protein belongs to the IspH family. Requires [4Fe-4S] cluster as cofactor.

The catalysed reaction is isopentenyl diphosphate + 2 oxidized [2Fe-2S]-[ferredoxin] + H2O = (2E)-4-hydroxy-3-methylbut-2-enyl diphosphate + 2 reduced [2Fe-2S]-[ferredoxin] + 2 H(+). It catalyses the reaction dimethylallyl diphosphate + 2 oxidized [2Fe-2S]-[ferredoxin] + H2O = (2E)-4-hydroxy-3-methylbut-2-enyl diphosphate + 2 reduced [2Fe-2S]-[ferredoxin] + 2 H(+). It participates in isoprenoid biosynthesis; dimethylallyl diphosphate biosynthesis; dimethylallyl diphosphate from (2E)-4-hydroxy-3-methylbutenyl diphosphate: step 1/1. The protein operates within isoprenoid biosynthesis; isopentenyl diphosphate biosynthesis via DXP pathway; isopentenyl diphosphate from 1-deoxy-D-xylulose 5-phosphate: step 6/6. Catalyzes the conversion of 1-hydroxy-2-methyl-2-(E)-butenyl 4-diphosphate (HMBPP) into a mixture of isopentenyl diphosphate (IPP) and dimethylallyl diphosphate (DMAPP). Acts in the terminal step of the DOXP/MEP pathway for isoprenoid precursor biosynthesis. In Cytophaga hutchinsonii (strain ATCC 33406 / DSM 1761 / CIP 103989 / NBRC 15051 / NCIMB 9469 / D465), this protein is 4-hydroxy-3-methylbut-2-enyl diphosphate reductase.